We begin with the raw amino-acid sequence, 28 residues long: QSPKDAYPYDISELVKDAYPYDISELVK.

It belongs to the 'GDSL' lipolytic enzyme family.

The protein is Putative GDSL-motif lipase/hydrolase-like protein of Populus euphratica (Euphrates poplar).